A 392-amino-acid polypeptide reads, in one-letter code: Queuine tRNA-ribosyltransferase (392 aa).

The active-site Proton acceptor is D93. Substrate-binding positions include 93 to 97, D147, Q189, and G216; that span reads DSGGY. Residues 247-253 form an RNA binding region; that stretch reads GVGAPED. D266 functions as the Nucleophile in the catalytic mechanism. Residues 271 to 275 are RNA binding; important for wobble base 34 recognition; it reads TRVAR. C304, C306, C309, and H335 together coordinate Zn(2+).

The protein belongs to the queuine tRNA-ribosyltransferase family. In terms of assembly, homodimer. Within each dimer, one monomer is responsible for RNA recognition and catalysis, while the other monomer binds to the replacement base PreQ1. Requires Zn(2+) as cofactor.

The enzyme catalyses 7-aminomethyl-7-carbaguanine + guanosine(34) in tRNA = 7-aminomethyl-7-carbaguanosine(34) in tRNA + guanine. It functions in the pathway tRNA modification; tRNA-queuosine biosynthesis. Functionally, catalyzes the base-exchange of a guanine (G) residue with the queuine precursor 7-aminomethyl-7-deazaguanine (PreQ1) at position 34 (anticodon wobble position) in tRNAs with GU(N) anticodons (tRNA-Asp, -Asn, -His and -Tyr). Catalysis occurs through a double-displacement mechanism. The nucleophile active site attacks the C1' of nucleotide 34 to detach the guanine base from the RNA, forming a covalent enzyme-RNA intermediate. The proton acceptor active site deprotonates the incoming PreQ1, allowing a nucleophilic attack on the C1' of the ribose to form the product. After dissociation, two additional enzymatic reactions on the tRNA convert PreQ1 to queuine (Q), resulting in the hypermodified nucleoside queuosine (7-(((4,5-cis-dihydroxy-2-cyclopenten-1-yl)amino)methyl)-7-deazaguanosine). This is Queuine tRNA-ribosyltransferase from Dehalococcoides mccartyi (strain ATCC BAA-2100 / JCM 16839 / KCTC 5957 / BAV1).